Consider the following 595-residue polypeptide: Aspartate--tRNA(Asp/Asn) ligase (595 aa).

Glutamate 171 provides a ligand contact to L-aspartate. Residues 195–198 (QLFK) form an aspartate region. Arginine 217 lines the L-aspartate pocket. Residues 217–219 (RDE) and glutamine 226 contribute to the ATP site. Histidine 454 is a binding site for L-aspartate. An ATP-binding site is contributed by glutamate 488. Residue arginine 495 coordinates L-aspartate. An ATP-binding site is contributed by 540–543 (GLDR).

Belongs to the class-II aminoacyl-tRNA synthetase family. Type 1 subfamily. As to quaternary structure, homodimer.

Its subcellular location is the cytoplasm. It carries out the reaction tRNA(Asx) + L-aspartate + ATP = L-aspartyl-tRNA(Asx) + AMP + diphosphate. Its function is as follows. Aspartyl-tRNA synthetase with relaxed tRNA specificity since it is able to aspartylate not only its cognate tRNA(Asp) but also tRNA(Asn). Reaction proceeds in two steps: L-aspartate is first activated by ATP to form Asp-AMP and then transferred to the acceptor end of tRNA(Asp/Asn). The chain is Aspartate--tRNA(Asp/Asn) ligase from Bordetella petrii (strain ATCC BAA-461 / DSM 12804 / CCUG 43448).